Reading from the N-terminus, the 78-residue chain is ATP synthase subunit c (78 aa).

The next 2 helical transmembrane spans lie at 12-32 (IGAG…GHVV) and 54-74 (FIGI…ALLL).

This sequence belongs to the ATPase C chain family. As to quaternary structure, F-type ATPases have 2 components, F(1) - the catalytic core - and F(0) - the membrane proton channel. F(1) has five subunits: alpha(3), beta(3), gamma(1), delta(1), epsilon(1). F(0) has four main subunits: a(1), b(1), b'(1) and c(10-14). The alpha and beta chains form an alternating ring which encloses part of the gamma chain. F(1) is attached to F(0) by a central stalk formed by the gamma and epsilon chains, while a peripheral stalk is formed by the delta, b and b' chains.

The protein localises to the cellular chromatophore membrane. F(1)F(0) ATP synthase produces ATP from ADP in the presence of a proton or sodium gradient. F-type ATPases consist of two structural domains, F(1) containing the extramembraneous catalytic core and F(0) containing the membrane proton channel, linked together by a central stalk and a peripheral stalk. During catalysis, ATP synthesis in the catalytic domain of F(1) is coupled via a rotary mechanism of the central stalk subunits to proton translocation. Its function is as follows. Key component of the F(0) channel; it plays a direct role in translocation across the membrane. A homomeric c-ring of between 10-14 subunits forms the central stalk rotor element with the F(1) delta and epsilon subunits. In Rhodobacter capsulatus (Rhodopseudomonas capsulata), this protein is ATP synthase subunit c.